The primary structure comprises 547 residues: Chaperonin GroEL 1 (547 aa).

Residues threonine 30–proline 33, lysine 51, aspartate 87–threonine 91, glycine 415, and aspartate 496 each bind ATP.

Belongs to the chaperonin (HSP60) family. As to quaternary structure, forms a cylinder of 14 subunits composed of two heptameric rings stacked back-to-back. Interacts with the co-chaperonin GroES.

Its subcellular location is the cytoplasm. It carries out the reaction ATP + H2O + a folded polypeptide = ADP + phosphate + an unfolded polypeptide.. In terms of biological role, together with its co-chaperonin GroES, plays an essential role in assisting protein folding. The GroEL-GroES system forms a nano-cage that allows encapsulation of the non-native substrate proteins and provides a physical environment optimized to promote and accelerate protein folding. The protein is Chaperonin GroEL 1 of Rhodopseudomonas palustris (strain BisA53).